A 354-amino-acid polypeptide reads, in one-letter code: MSELKNDRYLRALLRQPVDVTPVWMMRQAGRYLPEYKATRAEAGDFMSLCRNADLACEVTLQPLRRFPLDATILFSDILTVPDAMGLGLWFEQGEGPRFARPIQHRRDVEQLPIPDPEQELGYVMNAVRAIRQRLQGAVPLIGFSGSPWTLATYMVEGGSSKAFTKIKQMLYAEPETLHLLLDKLADSVVLYLNGQIRAGAQAVMLFDTWGGALTGADYREFSMHYMHKIVDGLLREQDGRRVPVTLFTKGGGQWLEAMAATGCDALGLDWSTDIADARRRVGDKVALQGNMDPSVLYGSPARIEREVATILDAFGPGEGHVFNLGHGIHQDVPPAHAGHFVAAVHRLSQSYHR.

Substrate-binding positions include 27–31 (RQAGR), aspartate 77, tyrosine 154, threonine 209, and histidine 327.

The protein belongs to the uroporphyrinogen decarboxylase family. As to quaternary structure, homodimer.

The protein localises to the cytoplasm. It carries out the reaction uroporphyrinogen III + 4 H(+) = coproporphyrinogen III + 4 CO2. Its pathway is porphyrin-containing compound metabolism; protoporphyrin-IX biosynthesis; coproporphyrinogen-III from 5-aminolevulinate: step 4/4. In terms of biological role, catalyzes the decarboxylation of four acetate groups of uroporphyrinogen-III to yield coproporphyrinogen-III. In Sodalis glossinidius (strain morsitans), this protein is Uroporphyrinogen decarboxylase.